A 112-amino-acid chain; its full sequence is ATP synthase subunit c (112 aa).

2 consecutive transmembrane segments (helical) span residues 36 to 56 (FSVL…AIGM) and 81 to 101 (MFIA…IALI).

The protein belongs to the ATPase C chain family. In terms of assembly, F-type ATPases have 2 components, F(1) - the catalytic core - and F(0) - the membrane proton channel. F(1) has five subunits: alpha(3), beta(3), gamma(1), delta(1), epsilon(1). F(0) has three main subunits: a(1), b(2) and c(10-14). The alpha and beta chains form an alternating ring which encloses part of the gamma chain. F(1) is attached to F(0) by a central stalk formed by the gamma and epsilon chains, while a peripheral stalk is formed by the delta and b chains.

It is found in the cell inner membrane. In terms of biological role, f(1)F(0) ATP synthase produces ATP from ADP in the presence of a proton or sodium gradient. F-type ATPases consist of two structural domains, F(1) containing the extramembraneous catalytic core and F(0) containing the membrane proton channel, linked together by a central stalk and a peripheral stalk. During catalysis, ATP synthesis in the catalytic domain of F(1) is coupled via a rotary mechanism of the central stalk subunits to proton translocation. Key component of the F(0) channel; it plays a direct role in translocation across the membrane. A homomeric c-ring of between 10-14 subunits forms the central stalk rotor element with the F(1) delta and epsilon subunits. The chain is ATP synthase subunit c from Campylobacter jejuni subsp. doylei (strain ATCC BAA-1458 / RM4099 / 269.97).